Here is an 85-residue protein sequence, read N- to C-terminus: Cell division topological specificity factor (85 aa).

This sequence belongs to the MinE family.

Prevents the cell division inhibition by proteins MinC and MinD at internal division sites while permitting inhibition at polar sites. This ensures cell division at the proper site by restricting the formation of a division septum at the midpoint of the long axis of the cell. The protein is Cell division topological specificity factor of Shewanella baltica (strain OS223).